Here is a 178-residue protein sequence, read N- to C-terminus: Ribosome maturation factor RimM (178 aa).

One can recognise a PRC barrel domain in the interval 104-177; sequence SDEYYFYEVI…KIVVKLPEWL (74 aa).

Belongs to the RimM family. As to quaternary structure, binds ribosomal protein uS19.

The protein localises to the cytoplasm. In terms of biological role, an accessory protein needed during the final step in the assembly of 30S ribosomal subunit, possibly for assembly of the head region. Essential for efficient processing of 16S rRNA. May be needed both before and after RbfA during the maturation of 16S rRNA. It has affinity for free ribosomal 30S subunits but not for 70S ribosomes. The chain is Ribosome maturation factor RimM from Thermosipho melanesiensis (strain DSM 12029 / CIP 104789 / BI429).